The primary structure comprises 420 residues: UDP-N-acetylglucosamine 1-carboxyvinyltransferase (420 aa).

22–23 (KN) contacts phosphoenolpyruvate. Arg92 contributes to the UDP-N-acetyl-alpha-D-glucosamine binding site. Cys116 (proton donor) is an active-site residue. 2-(S-cysteinyl)pyruvic acid O-phosphothioketal is present on Cys116. Residues 121 to 125 (RPVDL), 161 to 164 (KVSV), Asp306, and Ile328 contribute to the UDP-N-acetyl-alpha-D-glucosamine site.

This sequence belongs to the EPSP synthase family. MurA subfamily.

Its subcellular location is the cytoplasm. The catalysed reaction is phosphoenolpyruvate + UDP-N-acetyl-alpha-D-glucosamine = UDP-N-acetyl-3-O-(1-carboxyvinyl)-alpha-D-glucosamine + phosphate. It functions in the pathway cell wall biogenesis; peptidoglycan biosynthesis. In terms of biological role, cell wall formation. Adds enolpyruvyl to UDP-N-acetylglucosamine. This Yersinia pseudotuberculosis serotype O:1b (strain IP 31758) protein is UDP-N-acetylglucosamine 1-carboxyvinyltransferase.